The primary structure comprises 233 residues: MFAFLLFIAFTSATNIILDLDQEVKDTNIYGVFLKNEASPEKLEEAEEKEKSSSAKPESSSNEDNEDDEDEKASSSDNSESSSSDKPDNKPEASSSDKPEASSSDKPDNKPEASSSDKPDNKPEASSSDKPDNKPEASSSDKPDNKPEASSSDKPDNKPEASSTNKPEASSTNKPEASSTNKPEASSTNKPEASSTSNSNDKSGSSSDNDNNNLDAASSPFIVFCAIIIAIIF.

The segment at 35–219 (KNEASPEKLE…DNNNLDAASS (185 aa)) is disordered. A compositionally biased stretch (basic and acidic residues) spans 38-53 (ASPEKLEEAEEKEKSS). Acidic residues predominate over residues 61 to 71 (SNEDNEDDEDE). 10 tandem repeats follow at residues 82 to 93 (SSSDKPDNKPEA), 102 to 113 (SSSDKPDNKPEA), 114 to 125 (SSSDKPDNKPEA), 126 to 137 (SSSDKPDNKPEA), 138 to 149 (SSSDKPDNKPEA), 150 to 161 (SSSDKPDNKPEA), 162 to 169 (SSTNKPEA), 170 to 177 (SSTNKPEA), 178 to 185 (SSTNKPEA), and 186 to 193 (SSTNKPEA). The 6 X 12 AA tandem repeats of S-S-S-D-K-P-D-N-K-P-E-A stretch occupies residues 82–161 (SSSDKPDNKP…SDKPDNKPEA (80 aa)). The segment covering 83 to 159 (SSDKPDNKPE…SSSDKPDNKP (77 aa)) has biased composition (basic and acidic residues). The segment covering 160–192 (EASSTNKPEASSTNKPEASSTNKPEASSTNKPE) has biased composition (polar residues). A 4 X 8 AA tandem repeats of S-S-T-N-K-P-E-A region spans residues 162–193 (SSTNKPEASSTNKPEASSTNKPEASSTNKPEA). Low complexity predominate over residues 193 to 219 (ASSTSNSNDKSGSSSDNDNNNLDAASS).

Post-translationally, phosphorylated on serine residue(s). O-glycosylated; glycans consist of single N-acetylglucosamine residues. In terms of processing, O-acylated; acyl group is probably palmitate, not myristate.

It localises to the cell membrane. In terms of biological role, plays a role in the adhesion to host cells. Involved in the adhesion to host apoptotic cells thereby facilitating their phagocytosis. In Entamoeba histolytica (strain ATCC 30459 / HM-1:IMSS / ABRM), this protein is Serine-rich 25 kDa antigen protein.